Here is a 200-residue protein sequence, read N- to C-terminus: Small ribosomal subunit protein uS4 (200 aa).

The S4 RNA-binding domain maps to 92–155 (SRLDAVVYSL…QNLDIIKESV (64 aa)).

The protein belongs to the universal ribosomal protein uS4 family. In terms of assembly, part of the 30S ribosomal subunit. Contacts protein S5. The interaction surface between S4 and S5 is involved in control of translational fidelity.

Functionally, one of the primary rRNA binding proteins, it binds directly to 16S rRNA where it nucleates assembly of the body of the 30S subunit. Its function is as follows. With S5 and S12 plays an important role in translational accuracy. The chain is Small ribosomal subunit protein uS4 from Staphylococcus epidermidis (strain ATCC 35984 / DSM 28319 / BCRC 17069 / CCUG 31568 / BM 3577 / RP62A).